The sequence spans 625 residues: Archaeosine synthase subunit alpha (625 aa).

In terms of domain architecture, PUA spans 556–624 (KYVVKIDDFV…VAVDVRHVKK (69 aa)).

Belongs to the archaeosine synthase type 1 family. As to quaternary structure, forms a robust complex with the archaeosine synthase beta subunit RaSEA. Formation of this complex highly increases lysine transfer activity. The complex likely consists of an alpha(2)beta(2) heterotetrameric structure.

It catalyses the reaction 7-cyano-7-carbaguanosine(15) in tRNA + L-lysine = 7-N-[(5S)-5-amino-5-carboxypentyl]formamidino-7-deazaguanosine(15) in tRNA. It functions in the pathway tRNA modification; archaeosine-tRNA biosynthesis. Functionally, functions in the biosynthesis of archaeosine, a modified nucleoside present in the dihydrouridine loop (D-loop) of archaeal tRNAs. Catalyzes the addition of L-lysine to the cyano group of 7-cyano-7-deazaguanine (preQ0)-modified tRNAs at position 15, to generate q0kN15-tRNA, a q0N lysine adduct identified as 7-N-[(5S)-5-amino-5-carboxypentyl]formamidino-7-deazaguanosine. The chain is Archaeosine synthase subunit alpha from Methanosarcina acetivorans (strain ATCC 35395 / DSM 2834 / JCM 12185 / C2A).